The following is a 72-amino-acid chain: uncharacterized protein (72 aa).

A helical membrane pass occupies residues 11–31 (WCCTVLSAFGVVILSVIAHLF).

The protein localises to the membrane. This is an uncharacterized protein from Saccharomyces cerevisiae (strain ATCC 204508 / S288c) (Baker's yeast).